A 228-amino-acid polypeptide reads, in one-letter code: Octanoyltransferase (228 aa).

A BPL/LPL catalytic domain is found at Glu31 to Phe212. Substrate is bound by residues Arg76–His83, Ala143–Gly145, and Gly156–Ala158. The Acyl-thioester intermediate role is filled by Cys174.

The protein belongs to the LipB family.

Its subcellular location is the cytoplasm. The catalysed reaction is octanoyl-[ACP] + L-lysyl-[protein] = N(6)-octanoyl-L-lysyl-[protein] + holo-[ACP] + H(+). The protein operates within protein modification; protein lipoylation via endogenous pathway; protein N(6)-(lipoyl)lysine from octanoyl-[acyl-carrier-protein]: step 1/2. Its function is as follows. Catalyzes the transfer of endogenously produced octanoic acid from octanoyl-acyl-carrier-protein onto the lipoyl domains of lipoate-dependent enzymes. Lipoyl-ACP can also act as a substrate although octanoyl-ACP is likely to be the physiological substrate. In Caldanaerobacter subterraneus subsp. tengcongensis (strain DSM 15242 / JCM 11007 / NBRC 100824 / MB4) (Thermoanaerobacter tengcongensis), this protein is Octanoyltransferase.